The primary structure comprises 92 residues: Small ribosomal subunit protein uS19 (92 aa).

Belongs to the universal ribosomal protein uS19 family.

In terms of biological role, protein S19 forms a complex with S13 that binds strongly to the 16S ribosomal RNA. The polypeptide is Small ribosomal subunit protein uS19 (Corynebacterium efficiens (strain DSM 44549 / YS-314 / AJ 12310 / JCM 11189 / NBRC 100395)).